A 316-amino-acid chain; its full sequence is tRNA dimethylallyltransferase (316 aa).

17–24 (GPTASGKT) contributes to the ATP binding site. 19 to 24 (TASGKT) lines the substrate pocket. Interaction with substrate tRNA stretches follow at residues 42-45 (DSAL), 166-170 (QRLSR), and 247-252 (RCVGYR).

This sequence belongs to the IPP transferase family. In terms of assembly, monomer. It depends on Mg(2+) as a cofactor.

It catalyses the reaction adenosine(37) in tRNA + dimethylallyl diphosphate = N(6)-dimethylallyladenosine(37) in tRNA + diphosphate. In terms of biological role, catalyzes the transfer of a dimethylallyl group onto the adenine at position 37 in tRNAs that read codons beginning with uridine, leading to the formation of N6-(dimethylallyl)adenosine (i(6)A). The protein is tRNA dimethylallyltransferase of Salmonella paratyphi C (strain RKS4594).